A 121-amino-acid polypeptide reads, in one-letter code: Putative iron-sulfur cluster insertion protein ErpA (121 aa).

Residues cysteine 49, cysteine 113, and cysteine 115 each contribute to the iron-sulfur cluster site.

This sequence belongs to the HesB/IscA family. As to quaternary structure, homodimer. The cofactor is iron-sulfur cluster.

Required for insertion of 4Fe-4S clusters. The sequence is that of Putative iron-sulfur cluster insertion protein ErpA from Paraburkholderia phymatum (strain DSM 17167 / CIP 108236 / LMG 21445 / STM815) (Burkholderia phymatum).